A 689-amino-acid polypeptide reads, in one-letter code: Polyribonucleotide nucleotidyltransferase (689 aa).

2 residues coordinate Mg(2+): aspartate 482 and aspartate 488. Positions 549-608 (PRMITLTIPQNKIGELIGPGGKNIRKIQEDNNVKIDIEETGRVFISGVESDGVKSAKEYV) constitute a KH domain. Residues 618-686 (GKIYKSRVTK…KQGRINLSIK (69 aa)) form the S1 motif domain.

Belongs to the polyribonucleotide nucleotidyltransferase family. Mg(2+) serves as cofactor.

The protein resides in the cytoplasm. The enzyme catalyses RNA(n+1) + phosphate = RNA(n) + a ribonucleoside 5'-diphosphate. In terms of biological role, involved in mRNA degradation. Catalyzes the phosphorolysis of single-stranded polyribonucleotides processively in the 3'- to 5'-direction. The sequence is that of Polyribonucleotide nucleotidyltransferase from Endomicrobium trichonymphae.